A 437-amino-acid polypeptide reads, in one-letter code: GTPase Der (437 aa).

2 consecutive EngA-type G domains span residues 4-167 (PVVA…PDEA) and 176-352 (IRFS…DNHR). Residues 10-17 (GRPNVGKS), 57-61 (DTGGI), 119-122 (NKVD), 182-189 (GRPNVGKS), 230-234 (DTAGM), and 295-298 (NKWD) contribute to the GTP site. In terms of domain architecture, KH-like spans 353-437 (KRISSSTLND…PIKLIVRARK (85 aa)).

Belongs to the TRAFAC class TrmE-Era-EngA-EngB-Septin-like GTPase superfamily. EngA (Der) GTPase family. In terms of assembly, associates with the 50S ribosomal subunit.

GTPase that plays an essential role in the late steps of ribosome biogenesis. In Leuconostoc citreum (strain KM20), this protein is GTPase Der.